The chain runs to 69 residues: Cytochrome c oxidase subunit 8A, mitochondrial (69 aa).

Residues 1 to 25 constitute a mitochondrion transit peptide; that stretch reads MSVLTPLLLRGLTGSARRLPVLRAQ. The short motif at 2 to 19 is the SIFI-degron element; the sequence is SVLTPLLLRGLTGSARRL. Residues 26–36 are Mitochondrial matrix-facing; it reads VHSKPPREKLG. The chain crosses the membrane as a helical span at residues 37–60; sequence TMDVAIGLTSCFVCFLLPSGWVLS. At 61-69 the chain is on the mitochondrial intermembrane side; that stretch reads HLETYKKRE.

This sequence belongs to the cytochrome c oxidase VIII family. In terms of assembly, component of the cytochrome c oxidase (complex IV, CIV), a multisubunit enzyme composed of 14 subunits. The complex is composed of a catalytic core of 3 subunits MT-CO1, MT-CO2 and MT-CO3, encoded in the mitochondrial DNA, and 11 supernumerary subunits COX4I, COX5A, COX5B, COX6A, COX6B, COX6C, COX7A, COX7B, COX7C, COX8 and NDUFA4, which are encoded in the nuclear genome. The complex exists as a monomer or a dimer and forms supercomplexes (SCs) in the inner mitochondrial membrane with NADH-ubiquinone oxidoreductase (complex I, CI) and ubiquinol-cytochrome c oxidoreductase (cytochrome b-c1 complex, complex III, CIII), resulting in different assemblies (supercomplex SCI(1)III(2)IV(1) and megacomplex MCI(2)III(2)IV(2)). In terms of processing, in response to mitochondrial stress, the precursor protein is ubiquitinated by the SIFI complex in the cytoplasm before mitochondrial import, leading to its degradation. Within the SIFI complex, UBR4 initiates ubiquitin chain that are further elongated or branched by KCMF1.

It localises to the mitochondrion inner membrane. The protein operates within energy metabolism; oxidative phosphorylation. Functionally, component of the cytochrome c oxidase, the last enzyme in the mitochondrial electron transport chain which drives oxidative phosphorylation. The respiratory chain contains 3 multisubunit complexes succinate dehydrogenase (complex II, CII), ubiquinol-cytochrome c oxidoreductase (cytochrome b-c1 complex, complex III, CIII) and cytochrome c oxidase (complex IV, CIV), that cooperate to transfer electrons derived from NADH and succinate to molecular oxygen, creating an electrochemical gradient over the inner membrane that drives transmembrane transport and the ATP synthase. Cytochrome c oxidase is the component of the respiratory chain that catalyzes the reduction of oxygen to water. Electrons originating from reduced cytochrome c in the intermembrane space (IMS) are transferred via the dinuclear copper A center (CU(A)) of subunit 2 and heme A of subunit 1 to the active site in subunit 1, a binuclear center (BNC) formed by heme A3 and copper B (CU(B)). The BNC reduces molecular oxygen to 2 water molecules using 4 electrons from cytochrome c in the IMS and 4 protons from the mitochondrial matrix. In Eulemur fulvus fulvus (Brown lemur), this protein is Cytochrome c oxidase subunit 8A, mitochondrial (COX8A).